The following is a 258-amino-acid chain: 5'-nucleotidase SurE (258 aa).

Positions 9, 10, 42, and 95 each coordinate a divalent metal cation.

This sequence belongs to the SurE nucleotidase family. A divalent metal cation serves as cofactor.

It is found in the cytoplasm. The enzyme catalyses a ribonucleoside 5'-phosphate + H2O = a ribonucleoside + phosphate. Its function is as follows. Nucleotidase that shows phosphatase activity on nucleoside 5'-monophosphates. The sequence is that of 5'-nucleotidase SurE from Campylobacter concisus (strain 13826).